A 162-amino-acid polypeptide reads, in one-letter code: Lymphocyte antigen 86 (162 aa).

The signal sequence occupies residues 1–20 (MKGFTATLFLWTLIFPSCSG). 3 disulfide bridges follow: cysteine 33–cysteine 58, cysteine 45–cysteine 154, and cysteine 102–cysteine 112. An N-linked (GlcNAc...) asparagine glycan is attached at asparagine 96. N-linked (GlcNAc...) asparagine glycosylation occurs at asparagine 156.

M-shaped tetramer of two CD180-LY86 heterodimers. Highly expressed in B-cells, monocytes and tonsil.

Its subcellular location is the secreted. The protein resides in the extracellular space. In terms of biological role, may cooperate with CD180 and TLR4 to mediate the innate immune response to bacterial lipopolysaccharide (LPS) and cytokine production. Important for efficient CD180 cell surface expression. This chain is Lymphocyte antigen 86 (LY86), found in Homo sapiens (Human).